The sequence spans 221 residues: Flavin-dependent thymidylate synthase (221 aa).

In terms of domain architecture, ThyX spans 9–209; sequence GFVKLLDHMG…PWTYESFIRY (201 aa). Residues S55, 78-80, and E86 each bind FAD; that span reads RHR. Residues 75 to 78, 86 to 90, and R148 contribute to the dUMP site; these read QWMR and ELSGR. The ThyX motif signature appears at 78-88; that stretch reads RHRIASYNELS. FAD-binding positions include 164–166 and N170; that span reads NAR. R175 contributes to the dUMP binding site. The Involved in ionization of N3 of dUMP, leading to its activation role is filled by R175.

Belongs to the thymidylate synthase ThyX family. Homotetramer. FAD is required as a cofactor.

The catalysed reaction is dUMP + (6R)-5,10-methylene-5,6,7,8-tetrahydrofolate + NADPH + H(+) = dTMP + (6S)-5,6,7,8-tetrahydrofolate + NADP(+). Its pathway is pyrimidine metabolism; dTTP biosynthesis. Its function is as follows. Catalyzes the reductive methylation of 2'-deoxyuridine-5'-monophosphate (dUMP) to 2'-deoxythymidine-5'-monophosphate (dTMP) while utilizing 5,10-methylenetetrahydrofolate (mTHF) as the methyl donor, and NADPH and FADH(2) as the reductant. This chain is Flavin-dependent thymidylate synthase, found in Pseudothermotoga lettingae (strain ATCC BAA-301 / DSM 14385 / NBRC 107922 / TMO) (Thermotoga lettingae).